The primary structure comprises 100 residues: NADH-quinone oxidoreductase subunit K (100 aa).

Helical transmembrane passes span 2–22 (VPTT…MIGV), 29–49 (IMVF…LVAF), and 63–83 (FIVM…IVAI).

It belongs to the complex I subunit 4L family. As to quaternary structure, NDH-1 is composed of 15 different subunits. Subunits NuoA, H, J, K, L, M, N constitute the membrane sector of the complex.

Its subcellular location is the cell membrane. It catalyses the reaction a quinone + NADH + 5 H(+)(in) = a quinol + NAD(+) + 4 H(+)(out). Its function is as follows. NDH-1 shuttles electrons from NADH, via FMN and iron-sulfur (Fe-S) centers, to quinones in the respiratory chain. The immediate electron acceptor for the enzyme in this species is believed to be a menaquinone. Couples the redox reaction to proton translocation (for every two electrons transferred, four hydrogen ions are translocated across the cytoplasmic membrane), and thus conserves the redox energy in a proton gradient. This Deinococcus deserti (strain DSM 17065 / CIP 109153 / LMG 22923 / VCD115) protein is NADH-quinone oxidoreductase subunit K.